The primary structure comprises 84 residues: uncharacterized protein (84 aa).

A helical membrane pass occupies residues 25–45 (ILMTVAGFIIAFAILVFQISF).

It is found in the membrane. This is an uncharacterized protein from Bacillus anthracis.